A 149-amino-acid chain; its full sequence is Large ribosomal subunit protein bL9 (149 aa).

Belongs to the bacterial ribosomal protein bL9 family.

In terms of biological role, binds to the 23S rRNA. The chain is Large ribosomal subunit protein bL9 from Helicobacter pylori (strain HPAG1).